The following is a 500-amino-acid chain: Cytochrome P450 2D26 (500 aa).

Ser-249 carries the phosphoserine modification. A heme-binding site is contributed by Cys-446.

The protein belongs to the cytochrome P450 family. Heme is required as a cofactor.

The protein resides in the endoplasmic reticulum membrane. Its subcellular location is the microsome membrane. It catalyses the reaction an organic molecule + reduced [NADPH--hemoprotein reductase] + O2 = an alcohol + oxidized [NADPH--hemoprotein reductase] + H2O + H(+). In terms of biological role, cytochromes P450 are a group of heme-thiolate monooxygenases. In liver microsomes, this enzyme is involved in an NADPH-dependent electron transport pathway. It oxidizes a variety of structurally unrelated compounds, including steroids, fatty acids, and xenobiotics. This Rattus norvegicus (Rat) protein is Cytochrome P450 2D26 (Cyp2d26).